The sequence spans 152 residues: Transcriptional regulator MraZ (152 aa).

2 SpoVT-AbrB domains span residues A5 to E52 and A81 to A124.

The protein belongs to the MraZ family. Forms oligomers.

It is found in the cytoplasm. It localises to the nucleoid. The polypeptide is Transcriptional regulator MraZ (Shewanella oneidensis (strain ATCC 700550 / JCM 31522 / CIP 106686 / LMG 19005 / NCIMB 14063 / MR-1)).